A 147-amino-acid chain; its full sequence is 18 kDa antigen 1 (147 aa).

In terms of domain architecture, sHSP spans 21-131; it reads TPTRPAVMPM…RPRKIAVGAA (111 aa).

Belongs to the small heat shock protein (HSP20) family.

In terms of biological role, not known. This protein is one of the major immune reactive proteins in mycobacteria. The protein is 18 kDa antigen 1 of Mycobacterium avium.